Reading from the N-terminus, the 111-residue chain is Probable monothiol glutaredoxin 2 (111 aa).

Positions 7-109 (LKFIQNAIKK…KMLKDETKLI (103 aa)) constitute a Glutaredoxin domain. Position 24 (Lys24) interacts with glutathione. Cys32 lines the [2Fe-2S] cluster pocket. Residues Arg61, Phe73, and 86–87 (CD) each bind glutathione.

Belongs to the glutaredoxin family. Monothiol subfamily.

The protein is Probable monothiol glutaredoxin 2 (grxC2) of Rickettsia typhi (strain ATCC VR-144 / Wilmington).